Here is a 46-residue protein sequence, read N- to C-terminus: Diuretic hormone class 1 (46 aa).

Isoleucine 46 is subject to Isoleucine amide.

It is found in the secreted. In terms of biological role, regulation of fluid secretion. Stimulates primary urine secretion by Malpighian tubules and causes a dose-dependent stimulation of cAMP levels in the tubules. Has a greater effect on the transport of Na(+) then K(+) ions. In vitro, has synergistic effects with the smaller diuretic hormone DH(31) which co-occurs with it. The protein is Diuretic hormone class 1 of Diploptera punctata (Pacific beetle cockroach).